A 393-amino-acid polypeptide reads, in one-letter code: Lipid-A-disaccharide synthase (393 aa).

Belongs to the LpxB family.

The enzyme catalyses a lipid X + a UDP-2-N,3-O-bis[(3R)-3-hydroxyacyl]-alpha-D-glucosamine = a lipid A disaccharide + UDP + H(+). Its pathway is bacterial outer membrane biogenesis; LPS lipid A biosynthesis. Functionally, condensation of UDP-2,3-diacylglucosamine and 2,3-diacylglucosamine-1-phosphate to form lipid A disaccharide, a precursor of lipid A, a phosphorylated glycolipid that anchors the lipopolysaccharide to the outer membrane of the cell. The sequence is that of Lipid-A-disaccharide synthase from Granulibacter bethesdensis (strain ATCC BAA-1260 / CGDNIH1).